The chain runs to 350 residues: UDP-glucose 4-epimerase 2 (350 aa).

Residues G12–I14, D33–N37, D63–L64, F85, and K89 each bind NAD(+). Position 129-131 (S129–T131) interacts with substrate. Catalysis depends on Y153, which acts as the Proton acceptor. Positions 157 and 181 each coordinate NAD(+). Substrate contacts are provided by residues Y181 to N183, N202 to L204, T220 to F222, R235, and R297 to D300.

The protein belongs to the NAD(P)-dependent epimerase/dehydratase family. Forms homodimers and heterodimers. NAD(+) is required as a cofactor. Widely expressed. Most highly expressed in stems and flowers.

Its subcellular location is the cytoplasm. It carries out the reaction UDP-alpha-D-glucose = UDP-alpha-D-galactose. It functions in the pathway carbohydrate metabolism; galactose metabolism. With respect to regulation, enhanced activity by NaCl. Enhanced activity by NAD(+). Strongly inhibited by UDP. Its function is as follows. Catalyzes the interconversion between UDP-glucose and UDP-galactose. Cooperates with UGE3 in pollen development and with UGE4 in cell wall carbohydrate biosynthesis and growth. In Arabidopsis thaliana (Mouse-ear cress), this protein is UDP-glucose 4-epimerase 2.